The primary structure comprises 408 residues: Imidazolonepropionase (408 aa).

2 residues coordinate Fe(3+): His73 and His75. Residues His73 and His75 each contribute to the Zn(2+) site. 4-imidazolone-5-propanoate-binding residues include Arg82, Tyr145, and His178. An N-formimidoyl-L-glutamate-binding site is contributed by Tyr145. His243 lines the Fe(3+) pocket. His243 contributes to the Zn(2+) binding site. Residue Gln246 coordinates 4-imidazolone-5-propanoate. Asp318 is a binding site for Fe(3+). A Zn(2+)-binding site is contributed by Asp318. Positions 320 and 322 each coordinate N-formimidoyl-L-glutamate. Ser323 serves as a coordination point for 4-imidazolone-5-propanoate.

This sequence belongs to the metallo-dependent hydrolases superfamily. HutI family. The cofactor is Zn(2+). Fe(3+) serves as cofactor.

It localises to the cytoplasm. It catalyses the reaction 4-imidazolone-5-propanoate + H2O = N-formimidoyl-L-glutamate. It participates in amino-acid degradation; L-histidine degradation into L-glutamate; N-formimidoyl-L-glutamate from L-histidine: step 3/3. Functionally, catalyzes the hydrolytic cleavage of the carbon-nitrogen bond in imidazolone-5-propanoate to yield N-formimidoyl-L-glutamate. It is the third step in the universal histidine degradation pathway. This Shewanella putrefaciens (strain CN-32 / ATCC BAA-453) protein is Imidazolonepropionase.